The chain runs to 1390 residues: DNA-directed RNA polymerase subunit beta (1390 aa).

It belongs to the RNA polymerase beta chain family. The RNAP catalytic core consists of 2 alpha, 1 beta, 1 beta' and 1 omega subunit. When a sigma factor is associated with the core the holoenzyme is formed, which can initiate transcription.

It catalyses the reaction RNA(n) + a ribonucleoside 5'-triphosphate = RNA(n+1) + diphosphate. DNA-dependent RNA polymerase catalyzes the transcription of DNA into RNA using the four ribonucleoside triphosphates as substrates. The protein is DNA-directed RNA polymerase subunit beta of Rhodopseudomonas palustris (strain HaA2).